A 144-amino-acid polypeptide reads, in one-letter code: MKTYHQKPTEVQRDWYVIDASGKVLGRLATQISTLLRGKHKPTFTPSIDGGDFVIVVNAEKIVLTGRKPDQKIYYRHTGYPGGIKATPYKMMLAKHPDRILRLAVKRMLPKNRMGRRLLSKLRIYAGPNHPHAAQQPKPYIPRW.

This sequence belongs to the universal ribosomal protein uL13 family. Part of the 50S ribosomal subunit.

Its function is as follows. This protein is one of the early assembly proteins of the 50S ribosomal subunit, although it is not seen to bind rRNA by itself. It is important during the early stages of 50S assembly. The protein is Large ribosomal subunit protein uL13 of Chloroflexus aurantiacus (strain ATCC 29366 / DSM 635 / J-10-fl).